The chain runs to 340 residues: Latency-related protein 1 (340 aa).

Disordered regions lie at residues 13–96 (AALW…PNRQ) and 254–340 (RLPG…PPRP). A run of 2 repeats spans residues 27-43 (PTPTHPHSHAPPLPRTP) and 59-75 (PTPTHPHSHAPPLPRTP). The segment at 27–75 (PTPTHPHSHAPPLPRTPTPSHPHSRAPPLPRAPTPTHPHSHAPPLPRTP) is 2 X 17 AA repeats. The span at 35–73 (HAPPLPRTPTPSHPHSRAPPLPRAPTPTHPHSHAPPLPR) shows a compositional bias: pro residues. The span at 287 to 307 (ARGGGSGGGRGPGGGRGGPRG) shows a compositional bias: gly residues. The segment covering 308–326 (SRGRGGRGRGGRGGGRRGR) has biased composition (basic residues).

This chain is Latency-related protein 1, found in Human herpesvirus 1 (strain F) (HHV-1).